The following is a 391-amino-acid chain: MLTKKTDPMIVSMGPHHPSMHGVLRLVVSLDGENVIDCDPVLGYLHRGMEKIAENRSIVQYLPYVTRWDYLATMFTEAITVNAPEKLANIQVPKRASYIRVIMLELSRIASHLLWLGPFMADIGAQTPFFYIFREREMVYDLFESATGMRMMHNYFRIGGVAVDLPYGWLDKCLDFCDYFLPKIAEYENLITNNPIFRKRVEGIGIISREDAINWGLSGAMLRGSGVQWDLRKVDHYECYDELDWSIQWQSDGDCLARYLVRMGEMRESIKIIQQALKAIPGGPYENLEARRLNEGPKSEWNDFEYQFISKKSSPTFKLPKNEHYVRVEAPKGELGIYLIGDDTVFPWRCKIRPPGFVNLQILPQLVKGMKLADIMTILGSIDIIMGEVDR.

The protein belongs to the complex I 49 kDa subunit family. NDH is composed of at least 16 different subunits, 5 of which are encoded in the nucleus.

The protein resides in the plastid. The protein localises to the chloroplast thylakoid membrane. It catalyses the reaction a plastoquinone + NADH + (n+1) H(+)(in) = a plastoquinol + NAD(+) + n H(+)(out). The enzyme catalyses a plastoquinone + NADPH + (n+1) H(+)(in) = a plastoquinol + NADP(+) + n H(+)(out). Its function is as follows. NDH shuttles electrons from NAD(P)H:plastoquinone, via FMN and iron-sulfur (Fe-S) centers, to quinones in the photosynthetic chain and possibly in a chloroplast respiratory chain. The immediate electron acceptor for the enzyme in this species is believed to be plastoquinone. Couples the redox reaction to proton translocation, and thus conserves the redox energy in a proton gradient. The protein is NAD(P)H-quinone oxidoreductase subunit H, chloroplastic of Chaetosphaeridium globosum (Charophycean green alga).